The chain runs to 337 residues: DNA-directed RNA polymerase subunit alpha (337 aa).

Residues 1 to 233 (MVREKVTVST…DLFIPFLHME (233 aa)) are alpha N-terminal domain (alpha-NTD). Residues 264-337 (NKKIALKSIF…FVIDLAKNKF (74 aa)) are alpha C-terminal domain (alpha-CTD).

This sequence belongs to the RNA polymerase alpha chain family. As to quaternary structure, in plastids the minimal PEP RNA polymerase catalytic core is composed of four subunits: alpha, beta, beta', and beta''. When a (nuclear-encoded) sigma factor is associated with the core the holoenzyme is formed, which can initiate transcription.

Its subcellular location is the plastid. It localises to the chloroplast. It catalyses the reaction RNA(n) + a ribonucleoside 5'-triphosphate = RNA(n+1) + diphosphate. Functionally, DNA-dependent RNA polymerase catalyzes the transcription of DNA into RNA using the four ribonucleoside triphosphates as substrates. The chain is DNA-directed RNA polymerase subunit alpha from Atropa belladonna (Belladonna).